Consider the following 592-residue polypeptide: Aspartate--tRNA(Asp/Asn) ligase (592 aa).

E176 is an L-aspartate binding site. The tract at residues 200–203 (QIFK) is aspartate. R222 contacts L-aspartate. ATP-binding positions include 222 to 224 (RDE) and Q231. An L-aspartate-binding site is contributed by H450. Residue E484 participates in ATP binding. Position 491 (R491) interacts with L-aspartate. 536-539 (GLDR) serves as a coordination point for ATP.

It belongs to the class-II aminoacyl-tRNA synthetase family. Type 1 subfamily. In terms of assembly, homodimer.

It localises to the cytoplasm. The catalysed reaction is tRNA(Asx) + L-aspartate + ATP = L-aspartyl-tRNA(Asx) + AMP + diphosphate. Functionally, aspartyl-tRNA synthetase with relaxed tRNA specificity since it is able to aspartylate not only its cognate tRNA(Asp) but also tRNA(Asn). Reaction proceeds in two steps: L-aspartate is first activated by ATP to form Asp-AMP and then transferred to the acceptor end of tRNA(Asp/Asn). The chain is Aspartate--tRNA(Asp/Asn) ligase from Anoxybacillus flavithermus (strain DSM 21510 / WK1).